We begin with the raw amino-acid sequence, 213 residues long: Calcium-dependent cell adhesion molecule 1 (213 aa).

4 tandem repeats follow at residues 1 to 48 (MSVD…LVGS), 49 to 97 (NVRC…GAFQ), 98 to 146 (WAVD…LTPP), and 147 to 194 (DSEI…FPKN). Residues 1–194 (MSVDANKVKF…IKKDETFPKN (194 aa)) form a 4 X approximate tandem repeats region.

The protein belongs to the Dictyostelium CAD family. In terms of processing, the N-terminus is blocked.

It is found in the cell membrane. Functionally, mediates calcium-dependent cell-cell adhesion during the early stage of development. This chain is Calcium-dependent cell adhesion molecule 1 (cadA), found in Dictyostelium discoideum (Social amoeba).